The sequence spans 1282 residues: Trafficking protein particle complex subunit 8 (1282 aa).

The segment at Thr245–Pro287 is disordered. Residues Ala255–Ser273 show a composition bias toward low complexity.

Plays a role in endoplasmic reticulum to Golgi apparatus trafficking at a very early stage. Involved in collagen secretion. The polypeptide is Trafficking protein particle complex subunit 8 (Caenorhabditis elegans).